The following is a 325-amino-acid chain: Probable isoaspartyl peptidase/L-asparaginase GA20639 (325 aa).

The active-site Nucleophile is Thr184. Substrate-binding positions include 212–215 and 235–238; these read RIGD and TGHG.

The protein belongs to the Ntn-hydrolase family. In terms of assembly, heterodimer of an alpha and beta chain produced by autocleavage. Cleaved into an alpha and beta chain by autocatalysis; this activates the enzyme. The N-terminal residue of the beta subunit is responsible for the nucleophile hydrolase activity.

The enzyme catalyses L-asparagine + H2O = L-aspartate + NH4(+). It catalyses the reaction Cleavage of a beta-linked Asp residue from the N-terminus of a polypeptide.. Functionally, has both L-asparaginase and beta-aspartyl peptidase activity. Does not have aspartylglucosaminidase activity and is inactive toward GlcNAc-L-Asn. Likewise, has no activity toward glutamine. This is Probable isoaspartyl peptidase/L-asparaginase GA20639 from Drosophila pseudoobscura pseudoobscura (Fruit fly).